We begin with the raw amino-acid sequence, 173 residues long: Shikimate kinase (173 aa).

ATP is bound at residue 14–19 (GAGKST). Mg(2+) is bound at residue Ser-18. Substrate contacts are provided by Asp-36, Arg-60, and Gly-82. Arg-120 is a binding site for ATP. Position 139 (Arg-139) interacts with substrate. ATP is bound at residue Gln-156.

This sequence belongs to the shikimate kinase family. In terms of assembly, monomer. Requires Mg(2+) as cofactor.

It localises to the cytoplasm. The catalysed reaction is shikimate + ATP = 3-phosphoshikimate + ADP + H(+). It participates in metabolic intermediate biosynthesis; chorismate biosynthesis; chorismate from D-erythrose 4-phosphate and phosphoenolpyruvate: step 5/7. Its function is as follows. Catalyzes the specific phosphorylation of the 3-hydroxyl group of shikimic acid using ATP as a cosubstrate. The protein is Shikimate kinase of Actinobacillus pleuropneumoniae serotype 5b (strain L20).